The primary structure comprises 526 residues: Peptide chain release factor 3 (526 aa).

Positions 9-277 (DLRRTFAIIS…GLTKWAPKPL (269 aa)) constitute a tr-type G domain. Residues 18–25 (SHPDAGKT), 86–90 (DTPGH), and 140–143 (NKMD) each bind GTP.

It belongs to the TRAFAC class translation factor GTPase superfamily. Classic translation factor GTPase family. PrfC subfamily.

It localises to the cytoplasm. Functionally, increases the formation of ribosomal termination complexes and stimulates activities of RF-1 and RF-2. It binds guanine nucleotides and has strong preference for UGA stop codons. It may interact directly with the ribosome. The stimulation of RF-1 and RF-2 is significantly reduced by GTP and GDP, but not by GMP. This Colwellia psychrerythraea (strain 34H / ATCC BAA-681) (Vibrio psychroerythus) protein is Peptide chain release factor 3.